Consider the following 242-residue polypeptide: Small ribosomal subunit protein uS3 (242 aa).

The KH type-2 domain maps to 39-109 (IRQYVKATLA…QIRINVVEVT (71 aa)). The interval 220–242 (KVNQPKRRQQKRRQQYDDRSNEG) is disordered. A compositionally biased stretch (basic residues) spans 223 to 232 (QPKRRQQKRR). Positions 233–242 (QQYDDRSNEG) are enriched in basic and acidic residues.

Belongs to the universal ribosomal protein uS3 family. In terms of assembly, part of the 30S ribosomal subunit. Forms a tight complex with proteins S10 and S14.

Its function is as follows. Binds the lower part of the 30S subunit head. Binds mRNA in the 70S ribosome, positioning it for translation. This is Small ribosomal subunit protein uS3 from Trichodesmium erythraeum (strain IMS101).